The sequence spans 142 residues: MNQTFSFNFDDTLSNSSGLINLEKINQNCSPNYQYFKIKFIGGYLHIKNKSGDILEKYDLKDLISLIALKKDYLKLSSPNNKKPNEFTNIKNKHLENRFNLYVINEDINGKITKNGILEEIILNRLLLSILLGNEENLLQIA.

It belongs to the TULIP P47 family. As to quaternary structure, orfX1 was not detected as part of a crude toxin extract that includes BoNTA2/NTNH, P47, OrfX2 and OrfX3.

Part of a botulinum neurotoxin type A2 (BoNT) locus; may be part of a progenitor toxin complex required to protect BoNT during its passage through the host gastrointestinal tract. Binds phosphatidylinositol (3,4) bisphosphate, phosphatidylethanolamine and phosphatidylserine. This chain is Protein OrfX1 (orfX1), found in Clostridium botulinum (strain Kyoto / Type A2).